A 371-amino-acid polypeptide reads, in one-letter code: AA9 family lytic polysaccharide monooxygenase B (371 aa).

Positions 1–25 (MSIAKIAGVVLGSAALVAGHGYVSG) are cleaved as a signal peptide. Residues histidine 20 and histidine 104 each coordinate Cu(2+). Intrachain disulfides connect cysteine 74–cysteine 194 and cysteine 115–cysteine 119. An N-linked (GlcNAc...) asparagine glycan is attached at asparagine 154. The O2 site is built by histidine 180 and glutamine 189. Tyrosine 191 contacts Cu(2+). The tract at residues 304–332 (HVQATSSSAAASTPTASSGASSGSGSSSS) is disordered. Residues 307-332 (ATSSSAAASTPTASSGASSGSGSSSS) are compositionally biased toward low complexity.

This sequence belongs to the polysaccharide monooxygenase AA9 family. Requires Cu(2+) as cofactor.

It is found in the secreted. It catalyses the reaction [(1-&gt;4)-beta-D-glucosyl]n+m + reduced acceptor + O2 = 4-dehydro-beta-D-glucosyl-[(1-&gt;4)-beta-D-glucosyl]n-1 + [(1-&gt;4)-beta-D-glucosyl]m + acceptor + H2O.. Lytic polysaccharide monooxygenase (LPMO) that depolymerizes crystalline and amorphous polysaccharides via the oxidation of scissile alpha- or beta-(1-4)-glycosidic bonds, yielding C1 and C4 oxidation products. Catalysis by LPMOs requires the reduction of the active-site copper from Cu(II) to Cu(I) by a reducing agent and H(2)O(2) or O(2) as a cosubstrate. In addition to cellulose, also cleaves the beta-(1!4)-glucan backbone of tamarind xyloglucan, irrespective of substitutions which contrasts with AA9A xyloglucan cleavage activity. The polypeptide is AA9 family lytic polysaccharide monooxygenase B (Aspergillus tamarii).